The following is a 557-amino-acid chain: Intraflagellar transport protein 56 (557 aa).

A disordered region spans residues 1–30 (MLLSRMKPAVGGEASTSSNEKKRKNKSKKI). Residues 21–30 (KKRKNKSKKI) are compositionally biased toward basic residues. 4 TPR repeats span residues 60-93 (EHADLWTGFCAFHVGDHKRAMEEYKALTLRPDCP), 95-128 (DVWVYLGCALFFLGLYKEAEEAALKGSKTQLQNR), 154-187 (TEDQLSLASIHYMRSHYQEAIDIYKRILLQNREF), and 471-504 (ANDCYKMGQFYYAAKAFDALERLDPNPEYWEGKR).

The protein belongs to the IFT56 family. Component of the IFT complex B.

Its subcellular location is the cell projection. It is found in the cilium. Functionally, component of the intraflagellar transport (IFT) complex B required for transport of proteins in the motile cilium. Required for transport of specific ciliary cargo proteins related to motility, while it is neither required for IFT complex B assembly or motion nor for cilium assembly. Plays a key role in maintaining the integrity of the IFT complex B and the proper ciliary localization of the IFT complex B components. Essential for maintaining proper microtubule organization within the ciliary axoneme. The sequence is that of Intraflagellar transport protein 56 from Danio rerio (Zebrafish).